The primary structure comprises 231 residues: Lipoprotein-releasing system ATP-binding protein LolD 2 (231 aa).

In terms of domain architecture, ABC transporter spans 6 to 230 (VEARSLSKSF…DGRLVGQDPA (225 aa)). Position 42–49 (42–49 (GPSGSGKS)) interacts with ATP.

This sequence belongs to the ABC transporter superfamily. Lipoprotein translocase (TC 3.A.1.125) family. As to quaternary structure, the complex is composed of two ATP-binding proteins (LolD) and two transmembrane proteins (LolC and LolE).

Its subcellular location is the cell inner membrane. Functionally, part of the ABC transporter complex LolCDE involved in the translocation of mature outer membrane-directed lipoproteins, from the inner membrane to the periplasmic chaperone, LolA. Responsible for the formation of the LolA-lipoprotein complex in an ATP-dependent manner. The polypeptide is Lipoprotein-releasing system ATP-binding protein LolD 2 (Rhodospirillum rubrum (strain ATCC 11170 / ATH 1.1.1 / DSM 467 / LMG 4362 / NCIMB 8255 / S1)).